The sequence spans 459 residues: ATP synthase subunit beta (459 aa).

148–155 is a binding site for ATP; the sequence is GGAGVGKT.

The protein belongs to the ATPase alpha/beta chains family. In terms of assembly, F-type ATPases have 2 components, CF(1) - the catalytic core - and CF(0) - the membrane proton channel. CF(1) has five subunits: alpha(3), beta(3), gamma(1), delta(1), epsilon(1). CF(0) has three main subunits: a(1), b(2) and c(9-12). The alpha and beta chains form an alternating ring which encloses part of the gamma chain. CF(1) is attached to CF(0) by a central stalk formed by the gamma and epsilon chains, while a peripheral stalk is formed by the delta and b chains.

The protein localises to the cell inner membrane. It carries out the reaction ATP + H2O + 4 H(+)(in) = ADP + phosphate + 5 H(+)(out). Produces ATP from ADP in the presence of a proton gradient across the membrane. The catalytic sites are hosted primarily by the beta subunits. In Hahella chejuensis (strain KCTC 2396), this protein is ATP synthase subunit beta.